The sequence spans 793 residues: DnaJ homolog subfamily C member 10 (793 aa).

The signal sequence occupies residues 1–32 (MGVWLSKDDYIRDLKRIILCFLIVYMAILVGT). Residues 35 to 100 (DFYSLLGVSK…DLRKKYDKYG (66 aa)) form the J domain. The Thioredoxin 1 domain occupies 130–232 (EIITLERREF…ESLVSFAMQH (103 aa)). Cys-158 and Cys-161 are disulfide-bonded. Trxb regions lie at residues 235-350 (STVT…LPDF) and 348-463 (PDFE…PQNF). 3 consecutive Thioredoxin domains span residues 454-553 (HVTT…IEDL), 557-662 (SVVS…SLRI), and 671-778 (VSTG…INEK). Cys-480 and Cys-483 are disulfide-bonded. N-linked (GlcNAc...) asparagine glycosylation is present at Asn-530. Disulfide bonds link Cys-588/Cys-591 and Cys-700/Cys-703. A Prevents secretion from ER motif is present at residues 790–793 (KDEL).

In terms of assembly, interacts with HSPA5 (via its J domain). Interacts with EDEM1.

Its subcellular location is the endoplasmic reticulum lumen. Endoplasmic reticulum disulfide reductase involved both in the correct folding of proteins and degradation of misfolded proteins. Required for efficient folding of proteins in the endoplasmic reticulum by catalyzing the removal of non-native disulfide bonds formed during the folding of proteins, such as LDLR. Also involved in endoplasmic reticulum-associated degradation (ERAD) by reducing incorrect disulfide bonds in misfolded glycoproteins recognized by EDEM1. Interaction with HSPA5 is required its activity, not for the disulfide reductase activity, but to facilitate the release of DNAJC10 from its substrate. Promotes apoptotic signaling pathway in response to endoplasmic reticulum stress. This Pongo abelii (Sumatran orangutan) protein is DnaJ homolog subfamily C member 10 (DNAJC10).